The primary structure comprises 440 residues: MKPIIAIVGRPNVGKSTLFNRLVGRRKAMVDDMPGVTRDRNYAEVNRFDVPFILVDTGGFEPETSDRLLQQMREQSRFAMDEADLILFVMDARGGLTPADRDVVDMLRRINKPVFYIINKVDGEKQEAEAGDFYSLGVDHIHTISAEHNRGVGDLMDEVLAAIPYDREKESDEEITRIAVVGRPNVGKSTLVNRLLGYERVVANPTAGTTRDAVDTRFTVNKKPYLLIDTAGIRRKGKTVQKVEKYSVMDALRSIERADVVLIVLNAEEGVTEQDSKIAGYAYEAGRGCIFVVNKWDTLAKDNSSIAKFTEEIRRNFKYLPFAPILFVSAETGQRTGKIIAEVDQVMEQYCKRVTTGELNRVFTQAVDENHAPLSAGRRVKFYFATQVAVKPPSFVVFTNCPEGIHFSYERYIMNRFREAFGFNGTPLKLIFRGRDKKDA.

2 EngA-type G domains span residues 3 to 167 (PIIA…PYDR) and 176 to 351 (TRIA…EQYC). GTP-binding positions include 9–16 (GRPNVGKS), 56–60 (DTGGF), 119–122 (NKVD), 182–189 (GRPNVGKS), 229–233 (DTAGI), and 294–297 (NKWD). The 85-residue stretch at 352-436 (KRVTTGELNR…PLKLIFRGRD (85 aa)) folds into the KH-like domain.

Belongs to the TRAFAC class TrmE-Era-EngA-EngB-Septin-like GTPase superfamily. EngA (Der) GTPase family. In terms of assembly, associates with the 50S ribosomal subunit.

Functionally, GTPase that plays an essential role in the late steps of ribosome biogenesis. The protein is GTPase Der of Geobacter sp. (strain M21).